Here is a 271-residue protein sequence, read N- to C-terminus: Imidazole glycerol phosphate synthase subunit HisF (271 aa).

Active-site residues include Asp12 and Asp136.

Belongs to the HisA/HisF family. Heterodimer of HisH and HisF.

The protein resides in the cytoplasm. The catalysed reaction is 5-[(5-phospho-1-deoxy-D-ribulos-1-ylimino)methylamino]-1-(5-phospho-beta-D-ribosyl)imidazole-4-carboxamide + L-glutamine = D-erythro-1-(imidazol-4-yl)glycerol 3-phosphate + 5-amino-1-(5-phospho-beta-D-ribosyl)imidazole-4-carboxamide + L-glutamate + H(+). Its pathway is amino-acid biosynthesis; L-histidine biosynthesis; L-histidine from 5-phospho-alpha-D-ribose 1-diphosphate: step 5/9. Its function is as follows. IGPS catalyzes the conversion of PRFAR and glutamine to IGP, AICAR and glutamate. The HisF subunit catalyzes the cyclization activity that produces IGP and AICAR from PRFAR using the ammonia provided by the HisH subunit. The protein is Imidazole glycerol phosphate synthase subunit HisF of Natronomonas pharaonis (strain ATCC 35678 / DSM 2160 / CIP 103997 / JCM 8858 / NBRC 14720 / NCIMB 2260 / Gabara) (Halobacterium pharaonis).